The chain runs to 291 residues: Tyrosine recombinase XerD (291 aa).

The region spanning 1–82 (MEEGLIDRLL…ACKRLYIWME (82 aa)) is the Core-binding (CB) domain. In terms of domain architecture, Tyr recombinase spans 103–285 (NIPTLITEQQ…ANVWLQGVVK (183 aa)). Catalysis depends on residues arginine 143, lysine 167, histidine 237, arginine 240, and histidine 263. The active-site O-(3'-phospho-DNA)-tyrosine intermediate is the tyrosine 272.

This sequence belongs to the 'phage' integrase family. XerD subfamily. As to quaternary structure, forms a cyclic heterotetrameric complex composed of two molecules of XerC and two molecules of XerD.

Its subcellular location is the cytoplasm. In terms of biological role, site-specific tyrosine recombinase, which acts by catalyzing the cutting and rejoining of the recombining DNA molecules. The XerC-XerD complex is essential to convert dimers of the bacterial chromosome into monomers to permit their segregation at cell division. It also contributes to the segregational stability of plasmids. The protein is Tyrosine recombinase XerD of Neisseria meningitidis serogroup A / serotype 4A (strain DSM 15465 / Z2491).